The primary structure comprises 578 residues: Arginine--tRNA ligase (578 aa).

A 'HIGH' region motif is present at residues 127-137 (PNLAKEMHVGH).

The protein belongs to the class-I aminoacyl-tRNA synthetase family. Monomer.

The protein resides in the cytoplasm. It carries out the reaction tRNA(Arg) + L-arginine + ATP = L-arginyl-tRNA(Arg) + AMP + diphosphate. This chain is Arginine--tRNA ligase, found in Pseudomonas putida (strain ATCC 700007 / DSM 6899 / JCM 31910 / BCRC 17059 / LMG 24140 / F1).